A 1050-amino-acid polypeptide reads, in one-letter code: Bifunctional glutamine synthetase adenylyltransferase/adenylyl-removing enzyme (1050 aa).

An adenylyl removase region spans residues 1–531 (MTDPLIHTRK…LHSQLFYRPL (531 aa)). Residues 537–1050 (NLSVDAMKLS…LDSVEARREL (514 aa)) form an adenylyl transferase region.

The protein belongs to the GlnE family. Mg(2+) serves as cofactor.

The enzyme catalyses [glutamine synthetase]-O(4)-(5'-adenylyl)-L-tyrosine + phosphate = [glutamine synthetase]-L-tyrosine + ADP. It catalyses the reaction [glutamine synthetase]-L-tyrosine + ATP = [glutamine synthetase]-O(4)-(5'-adenylyl)-L-tyrosine + diphosphate. Functionally, involved in the regulation of glutamine synthetase GlnA, a key enzyme in the process to assimilate ammonia. When cellular nitrogen levels are high, the C-terminal adenylyl transferase (AT) inactivates GlnA by covalent transfer of an adenylyl group from ATP to specific tyrosine residue of GlnA, thus reducing its activity. Conversely, when nitrogen levels are low, the N-terminal adenylyl removase (AR) activates GlnA by removing the adenylyl group by phosphorolysis, increasing its activity. The regulatory region of GlnE binds the signal transduction protein PII (GlnB) which indicates the nitrogen status of the cell. The sequence is that of Bifunctional glutamine synthetase adenylyltransferase/adenylyl-removing enzyme from Corynebacterium efficiens (strain DSM 44549 / YS-314 / AJ 12310 / JCM 11189 / NBRC 100395).